Consider the following 558-residue polypeptide: Podocalyxin (558 aa).

The N-terminal stretch at 1–22 is a signal peptide; sequence MRCALALSALLLLLSTPPLLPS. Positions 20–29 are enriched in pro residues; the sequence is LPSSPSPSPS. Disordered regions lie at residues 20–50, 83–210, and 270–338; these read LPSSPSPSPSPSQNATQTTTDSSNKTAPTPA, LGVS…DHLM, and SVIS…VAHE. Residues 23-461 lie on the Extracellular side of the membrane; the sequence is SPSPSPSPSQ…EEAEDRFSMP (439 aa). Composition is skewed to polar residues over residues 32-50 and 83-107; these read QNATQTTTDSSNKTAPTPA and LGVSSDSPGTTTLAQQVSGPVNTTV. Asn-33, Asn-43, and Asn-104 each carry an N-linked (GlcNAc...) asparagine glycan. Positions 125-142 are enriched in low complexity; the sequence is STKSADTTTVATSTATAK. Polar residues-rich tracts occupy residues 143–173, 190–204, and 270–302; these read PNTTSSQNGAEDTTNSGGKSSHSVTTDLTST, RQPTSTHPVATPTSS, and SVISQRTQQTSSQMPASSTAPSSQETVQPTSPA. The N-linked (GlcNAc...) asparagine glycan is linked to Asn-144. Over residues 313–324 the composition is skewed to low complexity; that stretch reads TMSSSPTAASTT. The N-linked (GlcNAc...) asparagine glycan is linked to Asn-360. A helical membrane pass occupies residues 462 to 482; it reads LIITIVCMASFLLLVAALYGC. At 483 to 558 the chain is on the cytoplasmic side; sequence CHQRLSQRKD…DLDEEEDTHL (76 aa). Thr-518 carries the phosphothreonine modification. Phosphoserine is present on residues Ser-529 and Ser-537. Thr-556 carries the post-translational modification Phosphothreonine.

It belongs to the podocalyxin family. As to quaternary structure, monomer; when associated with the membrane raft. Oligomer; when integrated in the apical membrane. Interacts (via the C-terminal PDZ-binding motif DTHL) with NHERF1 (via the PDZ domains); the interaction is not detected in glomerular epithelium cells, take place early in the secretory pathway and is necessary for its apical membrane sorting. Found in a complex with EZR, PODXL and NHERF2. Associates with the actin cytoskeleton through complex formation with EZR and NHERF2. Interacts (via the C-terminal PDZ-binding motif DTHL) with NHERF2 (via the PDZ 1 domain); interaction is detected in glomerular epithelium cells. Interacts with EZR. Post-translationally, N- and O-linked glycosylated. Sialoglycoprotein. In terms of tissue distribution, glomerular epithelium cell (podocyte).

Its subcellular location is the apical cell membrane. The protein resides in the cell projection. It localises to the lamellipodium. The protein localises to the filopodium. It is found in the ruffle. Its subcellular location is the microvillus. The protein resides in the membrane raft. It localises to the membrane. Functionally, involved in the regulation of both adhesion and cell morphology and cancer progression. Functions as an anti-adhesive molecule that maintains an open filtration pathway between neighboring foot processes in the podocyte by charge repulsion. Acts as a pro-adhesive molecule, enhancing the adherence of cells to immobilized ligands, increasing the rate of migration and cell-cell contacts in an integrin-dependent manner. Induces the formation of apical actin-dependent microvilli. Involved in the formation of a preapical plasma membrane subdomain to set up initial epithelial polarization and the apical lumen formation during renal tubulogenesis. Plays a role in cancer development and aggressiveness by inducing cell migration and invasion through its interaction with the actin-binding protein EZR. Affects EZR-dependent signaling events, leading to increased activities of the MAPK and PI3K pathways in cancer cells. This is Podocalyxin (PODXL) from Homo sapiens (Human).